A 161-amino-acid polypeptide reads, in one-letter code: Regulator of ribonuclease activity A (161 aa).

Belongs to the RraA family. Homotrimer. Binds to both RNA-binding sites in the C-terminal region of Rne and to RhlB.

It localises to the cytoplasm. In terms of biological role, globally modulates RNA abundance by binding to RNase E (Rne) and regulating its endonucleolytic activity. Can modulate Rne action in a substrate-dependent manner by altering the composition of the degradosome. Modulates RNA-binding and helicase activities of the degradosome. In Erwinia tasmaniensis (strain DSM 17950 / CFBP 7177 / CIP 109463 / NCPPB 4357 / Et1/99), this protein is Regulator of ribonuclease activity A.